The following is a 140-amino-acid chain: Profilin-2 (140 aa).

Ala-2 is subject to N-acetylalanine.

Belongs to the profilin family. Occurs in many kinds of cells as a complex with monomeric actin in a 1:1 ratio. Interacts with PFN2. Interacts with ACTMAP (via N-terminus); the interaction may facilitate efficient cleavage of the acetylated N-terminus of immature actin by ACTMAP.

The protein localises to the cytoplasm. The protein resides in the cytoskeleton. Binds to actin and affects the structure of the cytoskeleton. At high concentrations, profilin prevents the polymerization of actin, whereas it enhances it at low concentrations. By binding to PIP2, it inhibits the formation of IP3 and DG. The sequence is that of Profilin-2 (PFN2) from Bos taurus (Bovine).